Here is a 701-residue protein sequence, read N- to C-terminus: Elongation factor G (701 aa).

Residues 8 to 291 (SRYRNIGIVA…AVIDFLPAPT (284 aa)) form the tr-type G domain. GTP-binding positions include 17–24 (AHVDAGKT), 89–93 (DTPGH), and 143–146 (NKMD).

Belongs to the TRAFAC class translation factor GTPase superfamily. Classic translation factor GTPase family. EF-G/EF-2 subfamily.

Its subcellular location is the cytoplasm. Catalyzes the GTP-dependent ribosomal translocation step during translation elongation. During this step, the ribosome changes from the pre-translocational (PRE) to the post-translocational (POST) state as the newly formed A-site-bound peptidyl-tRNA and P-site-bound deacylated tRNA move to the P and E sites, respectively. Catalyzes the coordinated movement of the two tRNA molecules, the mRNA and conformational changes in the ribosome. In Pseudomonas fluorescens (strain Pf0-1), this protein is Elongation factor G.